The primary structure comprises 818 residues: Myosin-A (818 aa).

At Ser19 the chain carries Phosphoserine; by PKG. The 675-residue stretch at 97–771 (MSFGDIGLLN…GAKILTKIQR (675 aa)) folds into the Myosin motor domain. Position 191-198 (191-198 (GESGAGKT)) interacts with ATP. An actin-binding region spans residues 661–671 (PHFIRCIKPNE). Residues 773-818 (KLVEWENCVSVIEAAILKHKYKQKVNKNIPSLLRVQAHIRKKMVAQ) are tail.

The protein belongs to the TRAFAC class myosin-kinesin ATPase superfamily. Myosin family. Component of the glideosome complex composed of GAP50, GAP45, MTIP and MyoA; the complex is formed during the late schizont stage and in merozoites. MyoA, MTIP and GAP45 probably form an initial complex in the cytoplasm which is then recruited to the outer face of the inner membrane complex via the interaction with GAP50. Interacts with ACT1.

The protein localises to the cell membrane. In terms of biological role, myosins are actin-based motor molecules with ATPase activity. Unconventional myosins serve in intracellular movements. Their highly divergent tails are presumed to bind to membranous compartments, which would be moved relative to actin filaments. The polypeptide is Myosin-A (Plasmodium falciparum (isolate 3D7)).